Consider the following 41-residue polypeptide: Large ribosomal subunit protein bL36 (41 aa).

This sequence belongs to the bacterial ribosomal protein bL36 family.

This is Large ribosomal subunit protein bL36 from Xylella fastidiosa (strain 9a5c).